A 1711-amino-acid polypeptide reads, in one-letter code: Protein chiffon (1711 aa).

Disordered stretches follow at residues 1–31 (MQPQ…AATP), 87–129 (KPEV…SRAD), and 244–307 (TKSK…IDSS). The segment at 1–400 (MQPQSDKQSA…PALREKSKRI (400 aa)) is sufficient for interaction with and activation of Cdc7. Composition is skewed to low complexity over residues 10-30 (ASRL…TAAT) and 97-109 (TPGT…TPTS). Serine 306 and serine 307 each carry phosphoserine. Residues 307 to 356 (SEKQGGVCEICKLEYDILNIHLQSKDHELFAKNSDNFLALDTLIQSSADV) form a DBF4-type zinc finger. Zn(2+) is bound by residues cysteine 314, cysteine 317, histidine 327, and histidine 333. Residues 365 to 378 (VESELDMDVDESLS) are compositionally biased toward acidic residues. Disordered regions lie at residues 365–507 (VESE…DSPS), 531–647 (MFPR…KPQL), 733–771 (LDEE…REQR), 791–817 (TEVK…KVKQ), 908–945 (QDKG…YKNK), 1005–1025 (RSTS…CRNK), 1055–1157 (QRQD…RNQS), 1271–1290 (ESEG…PPTD), 1303–1329 (MGSA…RMSN), 1343–1370 (LKSN…ALPD), and 1383–1644 (LHPI…SKYA). Serine 406, serine 407, serine 417, serine 432, and serine 435 each carry phosphoserine. The segment covering 429 to 439 (QGNSPGSLSEL) has biased composition (polar residues). The segment covering 445–454 (PTTAAATPTT) has biased composition (low complexity). Phosphoserine is present on serine 467. Residues 493–505 (PRGRGRPPNQVDS) constitute a DNA-binding region (a.T hook). Positions 537-546 (VPTTRSSSEL) are enriched in polar residues. Residues serine 542, serine 543, and serine 544 each carry the phosphoserine modification. The segment covering 549 to 560 (DVDRQTTSDVRG) has biased composition (basic and acidic residues). Residues 563 to 575 (SISSASLDTSTSE) show a composition bias toward low complexity. Residues 588-601 (IRKRAQAVGRRRKV) are compositionally biased toward basic residues. Residues 793–812 (VKTSPSKSRTKIQKPSSPTK) show a composition bias toward polar residues. Positions 908 to 932 (QDKGEQIKLEDQKPAPKKEVKKEEE) are enriched in basic and acidic residues. Positions 1006-1018 (STSSSSCSNSQRS) are enriched in low complexity. Phosphothreonine is present on threonine 1081. 2 positions are modified to phosphoserine: serine 1091 and serine 1092. The span at 1092-1101 (SPRTTRSQAA) shows a compositional bias: polar residues. Over residues 1398–1407 (TTTTTTTTTT) the composition is skewed to low complexity. A sufficient for interaction with Gcn5 region spans residues 1400–1695 (TTTTTTTTSA…NAWRRTQRRA (296 aa)). Over residues 1435 to 1445 (ADDKQNSREDA) the composition is skewed to basic and acidic residues. Acidic residues-rich tracts occupy residues 1453–1475 (DVDE…DETM) and 1483–1518 (QDVE…EEQD). Composition is skewed to polar residues over residues 1536–1545 (ISVTTPPEDS) and 1556–1591 (HNGQ…SCIS).

Component of the Dbf4-dependent kinase (DDK) complex consisting of Cdc7 and the Dbf4 ortholog chif. Interacts with Cdc7; the interaction is direct. Interacts with CG5790. As to quaternary structure, component of the Chiffon histone acetyltransferase (CHAT) complex consisting of Ada3, Sgf29, Gcn5, chif/chiffon and Ada2b (Isoform A). Interacts (via C-terminus) with Gcn5; the interaction is direct but weak in the absence of other CHAT components. In terms of processing, may be proteolytically cleaved to produce a N-terminal 50 kDa product.

It localises to the nucleus. A bicistronic gene producing two proteins that are components of different complexes and have separate properties and functions. Full-length protein is proteolytically cleaved, producing a ~50kDa N-terminal product (Chiffon-A) that forms part of the DDK complex; it is unclear if the C-terminal proteolytic product is stable or functional. Alternative initiation from an internal ribosome entry site produces a C-terminal ~48kDa product (Chiffon-B or Isoform E) that forms part of the CHAT complex. Involved in regulation of gene expression during embryonic development. Its function is as follows. Regulatory component of the Dbf4-dependent kinase (DDK) complex. Required for the amplification stage, but not the preceding endoreplication stage of DNA replication in egg chamber follicle cells of the ovary. May be involved in initiation of DNA replication; activation of the chorion gene origins. May have a role in eye and thoracic bristle development. Required for female fertility; is not required for oogenesis but is required maternally for early embryo development. Functionally, component of the CHAT histone acetyltransferase complex, which predominantly acetylates histone H3. As part of the CHAT complex involved in acetylation of histone H3 on 'Lys-10' (H3K9ac), 'Lys-15' (H3K14ac) and 'Lys-19' (H3K18ac), but not 'Lys-25' (H3K24ac). May also regulate other histone acetyltransferase complexes. Essential for viability. Not required for early stages of embryonic development. May be involved in zygotic genome activation during embryogenesis. This is Protein chiffon from Drosophila melanogaster (Fruit fly).